The following is a 339-amino-acid chain: tRNA dimethylallyltransferase (339 aa).

36 to 43 (GPTGSGKT) provides a ligand contact to ATP. 38 to 43 (TGSGKT) contributes to the substrate binding site. The tract at residues 61–64 (DSMQ) is interaction with substrate tRNA.

The protein belongs to the IPP transferase family. Monomer. The cofactor is Mg(2+).

The catalysed reaction is adenosine(37) in tRNA + dimethylallyl diphosphate = N(6)-dimethylallyladenosine(37) in tRNA + diphosphate. Its function is as follows. Catalyzes the transfer of a dimethylallyl group onto the adenine at position 37 in tRNAs that read codons beginning with uridine, leading to the formation of N6-(dimethylallyl)adenosine (i(6)A). The protein is tRNA dimethylallyltransferase of Chlamydia trachomatis serovar A (strain ATCC VR-571B / DSM 19440 / HAR-13).